The primary structure comprises 713 residues: Cytosolic endo-beta-N-acetylglucosaminidase (713 aa).

A disordered region spans residues 1–36 (MIARKRKSNGSETTSGKIPKDDVSSESCLDQPADES). Positions 270-362 (FFDACDGFFT…DFRQNQDKFW (93 aa)) constitute a BRCT domain.

This sequence belongs to the glycosyl hydrolase 85 family.

Its subcellular location is the cytoplasm. It is found in the cytosol. It catalyses the reaction an N(4)-(oligosaccharide-(1-&gt;3)-[oligosaccharide-(1-&gt;6)]-beta-D-Man-(1-&gt;4)-beta-D-GlcNAc-(1-&gt;4)-alpha-D-GlcNAc)-L-asparaginyl-[protein] + H2O = an oligosaccharide-(1-&gt;3)-[oligosaccharide-(1-&gt;6)]-beta-D-Man-(1-&gt;4)-D-GlcNAc + N(4)-(N-acetyl-beta-D-glucosaminyl)-L-asparaginyl-[protein]. Functionally, endoglycosidase that releases N-glycans from glycoproteins by cleaving the beta-1,4-glycosidic bond in the N,N'-diacetylchitobiose core. Involved in the processing of free oligosaccharides in the cytosol. This is Cytosolic endo-beta-N-acetylglucosaminidase (engase) from Danio rerio (Zebrafish).